The sequence spans 373 residues: NAD-dependent protein deacylase SRT2 (373 aa).

A mitochondrion-targeting transit peptide spans 1 to 47 (MNMRRVFGGVSTDLFPSRSMYRPLQSGGNLVMLFKGCRRFVRTTCRV). The 299-residue stretch at 75-373 (DPPNMEDIHK…DVGSLSVPAL (299 aa)) folds into the Deacetylase sirtuin-type domain. Residues 100–120 (GAGV…GAYS) and 179–182 (QNVD) each bind NAD(+). Histidine 196 acts as the Proton acceptor in catalysis. Zn(2+)-binding residues include cysteine 204, cysteine 207, cysteine 271, and cysteine 274. Residues 311 to 313 (GSS), 337 to 339 (NIG), and valine 355 contribute to the NAD(+) site.

Belongs to the sirtuin family. Class II subfamily. In terms of assembly, binds to the promoter region of genes influenced by ethylene. Interacts with ENAP1; this interaction is enhanced in the presence of ethylene. Requires Zn(2+) as cofactor.

Its subcellular location is the mitochondrion matrix. It is found in the nucleus. It catalyses the reaction N(6)-acetyl-L-lysyl-[protein] + NAD(+) + H2O = 2''-O-acetyl-ADP-D-ribose + nicotinamide + L-lysyl-[protein]. Functionally, NAD-dependent protein deacylase. Catalyzes the NAD-dependent hydrolysis of acyl groups from lysine residues. Involved in responses to ethylene leading to the transcriptional repression of some ethylene-responsive genes via the regulation of histone acetylation H3K9Ac. Negatively regulates plant basal defense against plant pathogens, possibly by suppressing salicylic acid biosynthesis. In Arabidopsis thaliana (Mouse-ear cress), this protein is NAD-dependent protein deacylase SRT2.